Here is a 35-residue protein sequence, read N- to C-terminus: Water stress-responsive protein 7 (35 aa).

This chain is Water stress-responsive protein 7, found in Pinus pinaster (Maritime pine).